We begin with the raw amino-acid sequence, 417 residues long: MLNKAMNIADYDPQLFKAIEDETRRQEEHIELIASENYTSPRVMEAQGSQLTNKYAEGYPGKRYYGGCEYVDVVETLAIERAKELFGATYANVQPHSGSQANSAVYMALLKPGDTVLGMNLAHGGHLTHGSPVNFSGKLYNIIPYGIDEAGKIDYVEMERLAVEHKPKMMIGGFSAFSGIVDWAKMREIADKIGAYLFVDMAHVAGLIAAGVYPNPVPHAHVVTSTTHKTLAGPRGGLILSAADDEDLYKKLNSAVFPGGQGGPLMHVIAGKAVAFKEALEPEFKTYQQQVVKNAKAMVEVFIERGYKIVSGGTDNHLMLVDLIGRDLTGKEADAALGSANITVNKNSVPNDPRSPFVTSGVRIGTPAITRRGFKEAEAKALTTWVCDILDDANNPAVIERVKGEVLALCAKYPVYA.

(6S)-5,6,7,8-tetrahydrofolate is bound by residues Leu121 and 125–127 (GHL). Position 229 is an N6-(pyridoxal phosphate)lysine (Lys229). Position 355-357 (355-357 (SPF)) interacts with (6S)-5,6,7,8-tetrahydrofolate.

It belongs to the SHMT family. In terms of assembly, homodimer. Pyridoxal 5'-phosphate is required as a cofactor.

The protein localises to the cytoplasm. It catalyses the reaction (6R)-5,10-methylene-5,6,7,8-tetrahydrofolate + glycine + H2O = (6S)-5,6,7,8-tetrahydrofolate + L-serine. It functions in the pathway one-carbon metabolism; tetrahydrofolate interconversion. The protein operates within amino-acid biosynthesis; glycine biosynthesis; glycine from L-serine: step 1/1. In terms of biological role, catalyzes the reversible interconversion of serine and glycine with tetrahydrofolate (THF) serving as the one-carbon carrier. This reaction serves as the major source of one-carbon groups required for the biosynthesis of purines, thymidylate, methionine, and other important biomolecules. Also exhibits THF-independent aldolase activity toward beta-hydroxyamino acids, producing glycine and aldehydes, via a retro-aldol mechanism. The protein is Serine hydroxymethyltransferase of Shewanella denitrificans (strain OS217 / ATCC BAA-1090 / DSM 15013).